Here is a 642-residue protein sequence, read N- to C-terminus: Chaperone protein DnaK (642 aa).

T200 is subject to Phosphothreonine; by autocatalysis. A compositionally biased stretch (low complexity) spans 608–618 (QAESQAAGEGQ). Positions 608–642 (QAESQAAGEGQPDAGKKDDGNVVDAEFEEVKKDKQ) are disordered.

It belongs to the heat shock protein 70 family.

Functionally, acts as a chaperone. The protein is Chaperone protein DnaK of Laribacter hongkongensis (strain HLHK9).